We begin with the raw amino-acid sequence, 623 residues long: Myosin light chain kinase 2, skeletal/cardiac muscle (623 aa).

2 disordered regions span residues 1-179 (MATE…PSCP) and 204-251 (GVPV…QGDT). At Ala-2 the chain carries N-acetylalanine. Residues 20–31 (APKAAAGEGPPA) show a composition bias toward low complexity. Basic and acidic residues-rich tracts occupy residues 32–43 (AEKDPGPPDPQK) and 49–89 (DPEK…EKGD). Residues 90–102 (GASAQPSASSQGP) are compositionally biased toward low complexity. The span at 150 to 159 (GEAKEQKKVA) shows a compositional bias: basic and acidic residues. Ser-169, Ser-175, and Ser-177 each carry phosphoserine. A compositionally biased stretch (low complexity) spans 204–214 (GVPVTPGPTET). The span at 215–224 (EPAKVAEGEK) shows a compositional bias: basic and acidic residues. Positions 312–567 (LNSKEALGGG…AAQCLAHPWL (256 aa)) constitute a Protein kinase domain. Residues 318–326 (LGGGKFGAV) and Lys-341 contribute to the ATP site. Asp-433 serves as the catalytic Proton acceptor. Phosphothreonine is present on Thr-472. The segment at 601 to 613 (IAVSAANRFKKIS) is calmodulin-binding.

The protein belongs to the protein kinase superfamily. CAMK Ser/Thr protein kinase family. As to quaternary structure, may interact with centrin.

The protein resides in the cytoplasm. It catalyses the reaction L-seryl-[myosin light chain] + ATP = O-phospho-L-seryl-[myosin light chain] + ADP + H(+). The enzyme catalyses L-threonyl-[myosin light chain] + ATP = O-phospho-L-threonyl-[myosin light chain] + ADP + H(+). Its function is as follows. Implicated in the level of global muscle contraction and cardiac function. Phosphorylates a specific serine in the N-terminus of a myosin light chain. The protein is Myosin light chain kinase 2, skeletal/cardiac muscle (MYLK2) of Bos taurus (Bovine).